The chain runs to 278 residues: Large ribosomal subunit protein uL2 (278 aa).

2 disordered regions span residues 32–57 (ALTE…IGGG) and 221–278 (RGVA…KKKR). A compositionally biased stretch (basic residues) spans 269-278 (IRSRHAKKKR).

It belongs to the universal ribosomal protein uL2 family. Part of the 50S ribosomal subunit. Forms a bridge to the 30S subunit in the 70S ribosome.

In terms of biological role, one of the primary rRNA binding proteins. Required for association of the 30S and 50S subunits to form the 70S ribosome, for tRNA binding and peptide bond formation. It has been suggested to have peptidyltransferase activity; this is somewhat controversial. Makes several contacts with the 16S rRNA in the 70S ribosome. This Zymomonas mobilis subsp. mobilis (strain ATCC 31821 / ZM4 / CP4) protein is Large ribosomal subunit protein uL2.